The chain runs to 219 residues: Poxin (219 aa).

His17 (proton donor) is an active-site residue. Tyr138 acts as the Shared with catalytic histidine of dimeric partner in catalysis. Catalysis depends on Lys142, which acts as the Proton acceptor; shared with catalytic histidine of dimeric partner.

Belongs to the poxin family. In terms of assembly, homodimer.

The catalysed reaction is 2',3'-cGAMP + H2O = Gp(2'-5')Ap(3') + H(+). In terms of biological role, nuclease that is responsible for viral evasion of host cGAS-STING innate immunity. Cleaves 2',3'-cGAMP which is produced by host cGAS following recognition of cytosolic DNA and blocks the subsequent 2',3'-cGAMP-mediated activation of TMEM173/STING, which normally spreads to adjacent cells and activates the interferon and NF-kappa-B immune responses. The polypeptide is Poxin (OPG188) (Homo sapiens (Human)).